Consider the following 351-residue polypeptide: Dihydroorotate dehydrogenase (quinone) (351 aa).

Residues 61–65 and Thr-85 contribute to the FMN site; that span reads AGLDK. A substrate-binding site is contributed by Lys-65. A substrate-binding site is contributed by 110–114; it reads NRMGF. Residues Asn-139 and Asn-172 each coordinate FMN. Substrate is bound at residue Asn-172. Ser-175 serves as the catalytic Nucleophile. Asn-177 contacts substrate. Residues Lys-217 and Thr-245 each coordinate FMN. 246–247 is a binding site for substrate; the sequence is NT. FMN is bound by residues Gly-268, Gly-297, and 318–319; that span reads YS.

It belongs to the dihydroorotate dehydrogenase family. Type 2 subfamily. As to quaternary structure, monomer. The cofactor is FMN.

The protein localises to the cell membrane. It carries out the reaction (S)-dihydroorotate + a quinone = orotate + a quinol. It participates in pyrimidine metabolism; UMP biosynthesis via de novo pathway; orotate from (S)-dihydroorotate (quinone route): step 1/1. Functionally, catalyzes the conversion of dihydroorotate to orotate with quinone as electron acceptor. This Xanthomonas oryzae pv. oryzae (strain MAFF 311018) protein is Dihydroorotate dehydrogenase (quinone).